Here is a 162-residue protein sequence, read N- to C-terminus: Crossover junction endodeoxyribonuclease RuvC (162 aa).

Catalysis depends on residues D7, E67, and D140. Residues D7, E67, and D140 each contribute to the Mg(2+) site.

It belongs to the RuvC family. In terms of assembly, homodimer which binds Holliday junction (HJ) DNA. The HJ becomes 2-fold symmetrical on binding to RuvC with unstacked arms; it has a different conformation from HJ DNA in complex with RuvA. In the full resolvosome a probable DNA-RuvA(4)-RuvB(12)-RuvC(2) complex forms which resolves the HJ. Requires Mg(2+) as cofactor.

Its subcellular location is the cytoplasm. The enzyme catalyses Endonucleolytic cleavage at a junction such as a reciprocal single-stranded crossover between two homologous DNA duplexes (Holliday junction).. The RuvA-RuvB-RuvC complex processes Holliday junction (HJ) DNA during genetic recombination and DNA repair. Endonuclease that resolves HJ intermediates. Cleaves cruciform DNA by making single-stranded nicks across the HJ at symmetrical positions within the homologous arms, yielding a 5'-phosphate and a 3'-hydroxyl group; requires a central core of homology in the junction. The consensus cleavage sequence is 5'-(A/T)TT(C/G)-3'. Cleavage occurs on the 3'-side of the TT dinucleotide at the point of strand exchange. HJ branch migration catalyzed by RuvA-RuvB allows RuvC to scan DNA until it finds its consensus sequence, where it cleaves and resolves the cruciform DNA. The sequence is that of Crossover junction endodeoxyribonuclease RuvC from Heliobacterium modesticaldum (strain ATCC 51547 / Ice1).